The chain runs to 708 residues: Polyribonucleotide nucleotidyltransferase (708 aa).

Residues aspartate 486 and aspartate 492 each coordinate Mg(2+). The KH domain occupies 553–612 (PRITTIKVPPQKVREVIGSGGKVIREITEVTGTKIDIEDDGTIKIASADAEATQRAVDWI). Residues 622–690 (GVVYTGKVVK…DRGKIKLSMK (69 aa)) enclose the S1 motif domain.

Belongs to the polyribonucleotide nucleotidyltransferase family. It depends on Mg(2+) as a cofactor.

The protein resides in the cytoplasm. It catalyses the reaction RNA(n+1) + phosphate = RNA(n) + a ribonucleoside 5'-diphosphate. Involved in mRNA degradation. Catalyzes the phosphorolysis of single-stranded polyribonucleotides processively in the 3'- to 5'-direction. The polypeptide is Polyribonucleotide nucleotidyltransferase (Rhodospirillum rubrum (strain ATCC 11170 / ATH 1.1.1 / DSM 467 / LMG 4362 / NCIMB 8255 / S1)).